The primary structure comprises 490 residues: AP-5 complex subunit mu-1 (490 aa).

An MHD domain is found at 206–476 (KPQVSISITE…LISSDYYIWN (271 aa)).

Belongs to the adaptor complexes medium subunit family. In terms of assembly, probably part of the adaptor protein complex 5 (AP-5) a tetramer composed of AP5B1, AP5M1, AP5S1 and AP5Z1.

Its subcellular location is the cytoplasm. It localises to the cytosol. The protein localises to the late endosome membrane. It is found in the lysosome membrane. In terms of biological role, as part of AP-5, a probable fifth adaptor protein complex it may be involved in endosomal transport. This chain is AP-5 complex subunit mu-1 (AP5M1), found in Bos taurus (Bovine).